We begin with the raw amino-acid sequence, 156 residues long: Bursicon (156 aa).

The first 26 residues, 1–26, serve as a signal peptide directing secretion; the sequence is MYALDFLFIAFVYFAACHIQEKPVRA. Disulfide bonds link Cys-37–Cys-86, Cys-51–Cys-100, Cys-61–Cys-121, Cys-65–Cys-123, and Cys-83–Cys-126. The CTCK domain maps to 37–127; that stretch reads CQMTPVIHIL…PLECMCRPCG (91 aa).

Heterodimer of burs and pburs.

It is found in the secreted. Its function is as follows. Final heterodimeric neurohormone released at the end of the molting cycle, involved in the sclerotization (tanning) of the insect cuticle, melanization and wing spreading. The protein is Bursicon of Manduca sexta (Tobacco hawkmoth).